Here is a 164-residue protein sequence, read N- to C-terminus: Large ribosomal subunit protein bL9 (164 aa).

This sequence belongs to the bacterial ribosomal protein bL9 family.

Its function is as follows. Binds to the 23S rRNA. This chain is Large ribosomal subunit protein bL9, found in Borrelia recurrentis (strain A1).